A 49-amino-acid polypeptide reads, in one-letter code: MKLNAFHLVVVVLIVSIFSVSSEDQTNGDIEYIDSNKISSYNDELCKDI.

The N-terminal stretch at 1-22 (MKLNAFHLVVVVLIVSIFSVSS) is a signal peptide.

Its subcellular location is the secreted. This is an uncharacterized protein from Dictyostelium discoideum (Social amoeba).